The primary structure comprises 552 residues: NADH-ubiquinone oxidoreductase chain 5 (552 aa).

The next 15 helical transmembrane spans lie at 11-31, 36-56, 68-88, 89-109, 121-141, 152-172, 196-216, 229-249, 256-274, 287-307, 322-342, 365-386, 406-426, 453-473, and 532-552; these read PVTI…PFGL, LAMT…AYAI, FYII…SDNY, LMMF…ISFW, SAIL…GLMI, IALV…LLLL, TPVS…YVLV, LLII…IAIV, VIAL…AIGI, HAFF…SFVA, LPFS…IPGL, ILYY…RVLY, SLGM…IGYS, AYIK…LVYV, and SRAV…LFFI.

It belongs to the complex I subunit 5 family.

Its subcellular location is the mitochondrion inner membrane. The catalysed reaction is a ubiquinone + NADH + 5 H(+)(in) = a ubiquinol + NAD(+) + 4 H(+)(out). Its function is as follows. Core subunit of the mitochondrial membrane respiratory chain NADH dehydrogenase (Complex I) that is believed to belong to the minimal assembly required for catalysis. Complex I functions in the transfer of electrons from NADH to the respiratory chain. The immediate electron acceptor for the enzyme is believed to be ubiquinone. This is NADH-ubiquinone oxidoreductase chain 5 (NAD5) from Candida albicans (strain SC5314 / ATCC MYA-2876) (Yeast).